We begin with the raw amino-acid sequence, 223 residues long: Endonuclease V (223 aa).

Mg(2+) is bound by residues Asp-35 and Asp-103.

This sequence belongs to the endonuclease V family. It depends on Mg(2+) as a cofactor.

It localises to the cytoplasm. The catalysed reaction is Endonucleolytic cleavage at apurinic or apyrimidinic sites to products with a 5'-phosphate.. DNA repair enzyme involved in the repair of deaminated bases. Selectively cleaves double-stranded DNA at the second phosphodiester bond 3' to a deoxyinosine leaving behind the intact lesion on the nicked DNA. The sequence is that of Endonuclease V from Salmonella agona (strain SL483).